The primary structure comprises 148 residues: HTH-type transcriptional regulator BilQ (148 aa).

The HTH marR-type domain maps to 1–140 (MDFKNLQYES…LVKNLHVVKD (140 aa)). A DNA-binding region (H-T-H motif) is located at residues 54–77 (LNDVSTEFEVDKAHTTRTISRLEQ).

Functionally, transcription regulator that regulates expression of the bilirubin reductase operon (bilQ, bilR and bilS). The protein is HTH-type transcriptional regulator BilQ of Clostridioides difficile (strain CD3).